Consider the following 243-residue polypeptide: Small ribosomal subunit protein eS4 (243 aa).

The S4 RNA-binding domain maps to 43–105; it reads IPLLYIVRDY…TGEHYRVLPN (63 aa).

It belongs to the eukaryotic ribosomal protein eS4 family.

The protein is Small ribosomal subunit protein eS4 (rps4e) of Pyrococcus abyssi (strain GE5 / Orsay).